The primary structure comprises 572 residues: Proline--tRNA ligase (572 aa).

It belongs to the class-II aminoacyl-tRNA synthetase family. ProS type 1 subfamily. As to quaternary structure, homodimer.

The protein resides in the cytoplasm. The catalysed reaction is tRNA(Pro) + L-proline + ATP = L-prolyl-tRNA(Pro) + AMP + diphosphate. Functionally, catalyzes the attachment of proline to tRNA(Pro) in a two-step reaction: proline is first activated by ATP to form Pro-AMP and then transferred to the acceptor end of tRNA(Pro). As ProRS can inadvertently accommodate and process non-cognate amino acids such as alanine and cysteine, to avoid such errors it has two additional distinct editing activities against alanine. One activity is designated as 'pretransfer' editing and involves the tRNA(Pro)-independent hydrolysis of activated Ala-AMP. The other activity is designated 'posttransfer' editing and involves deacylation of mischarged Ala-tRNA(Pro). The misacylated Cys-tRNA(Pro) is not edited by ProRS. The sequence is that of Proline--tRNA ligase from Psychrobacter arcticus (strain DSM 17307 / VKM B-2377 / 273-4).